Reading from the N-terminus, the 420-residue chain is Arginine biosynthesis bifunctional protein ArgJ (420 aa).

Positions 167, 193, 204, 284, 415, and 420 each coordinate substrate. Thr204 acts as the Nucleophile in catalysis.

It belongs to the ArgJ family. Heterotetramer of two alpha and two beta chains.

The protein resides in the cytoplasm. It carries out the reaction N(2)-acetyl-L-ornithine + L-glutamate = N-acetyl-L-glutamate + L-ornithine. The enzyme catalyses L-glutamate + acetyl-CoA = N-acetyl-L-glutamate + CoA + H(+). The protein operates within amino-acid biosynthesis; L-arginine biosynthesis; L-ornithine and N-acetyl-L-glutamate from L-glutamate and N(2)-acetyl-L-ornithine (cyclic): step 1/1. It functions in the pathway amino-acid biosynthesis; L-arginine biosynthesis; N(2)-acetyl-L-ornithine from L-glutamate: step 1/4. In terms of biological role, catalyzes two activities which are involved in the cyclic version of arginine biosynthesis: the synthesis of N-acetylglutamate from glutamate and acetyl-CoA as the acetyl donor, and of ornithine by transacetylation between N(2)-acetylornithine and glutamate. This is Arginine biosynthesis bifunctional protein ArgJ from Prochlorococcus marinus (strain NATL2A).